The following is a 333-amino-acid chain: Acetyl-coenzyme A carboxylase carboxyl transferase subunit alpha (333 aa).

In terms of domain architecture, CoA carboxyltransferase C-terminal spans 48 to 308; it reads ALEVKVETLR…KEMLIEELRI (261 aa).

Belongs to the AccA family. Acetyl-CoA carboxylase is a heterohexamer composed of biotin carboxyl carrier protein (AccB), biotin carboxylase (AccC) and two subunits each of ACCase subunit alpha (AccA) and ACCase subunit beta (AccD).

Its subcellular location is the cytoplasm. It carries out the reaction N(6)-carboxybiotinyl-L-lysyl-[protein] + acetyl-CoA = N(6)-biotinyl-L-lysyl-[protein] + malonyl-CoA. It functions in the pathway lipid metabolism; malonyl-CoA biosynthesis; malonyl-CoA from acetyl-CoA: step 1/1. Functionally, component of the acetyl coenzyme A carboxylase (ACC) complex. First, biotin carboxylase catalyzes the carboxylation of biotin on its carrier protein (BCCP) and then the CO(2) group is transferred by the carboxyltransferase to acetyl-CoA to form malonyl-CoA. In Chlorobium phaeobacteroides (strain DSM 266 / SMG 266 / 2430), this protein is Acetyl-coenzyme A carboxylase carboxyl transferase subunit alpha.